The sequence spans 550 residues: MNYLLLVSGLLSVWQPVFGSRCGESTIPFSLEILPSGHPVLGCARPTCFGWHPKGYQLPTTAKFSRLNRKLDGFLRDDSLFTYPFETDSSKIYKVQNSTCEPGFQSSKCDSKDQWVGGIEPETDAFQDVAYQCCTYAPLRESTDRNIATVSAGEIVIGGEVYQNESQYAFDYISNIEKSMDENGEVYYEVNIRRFACLDPHNADRRIDEVWSSENTIRKVNGQKPIAQQAPNVAVNAPIEAGTFDGEVVDGQTVVIEEIIAQQGFIVENETTVAPFAGPFQAQGFQPRFGAPQGFQPAFQQPPPQQFFPQNFQPVVQQPVQFPAQPVGYAPYAPAGWQLHYCFPADAEVNVYEKGVKRMDELEVGDWVQALHGKETTYSPVKYWLHRDPEQEAEFVEFLLENGESFTLTEKHLVFATDCQQNVKNLDDLNPTSTGKINIGECFFMAQPENASKFQKVQILDIQRVRKTGIYAPMTSLGHLLVNQIHTSCHSEIDHHLLQNSFFKHVLKLKNRISKYFWNEESNTEGNIGTSLNFLIEIFELIVPSKMISY.

Positions 1-19 (MNYLLLVSGLLSVWQPVFG) are cleaved as a signal peptide.

It belongs to the hedgehog family. The C-terminal domain displays an autoproteolysis activity.

The protein localises to the secreted. Its subcellular location is the cell surface. It is found in the cell membrane. The protein resides in the extracellular space. In terms of biological role, intercellular signal essential for a variety of patterning events during development. The chain is Warthog protein 8 (wrt-8) from Caenorhabditis elegans.